The following is a 421-amino-acid chain: Testin (421 aa).

Positions 92-199 (MILTNPVAAR…GDVKLPCELD (108 aa)) constitute a PET domain. The disordered stretch occupies residues 134-164 (KQPVAGSEGAQYRKKQLAKQLPAHDQDPSKC). The span at 155–164 (PAHDQDPSKC) shows a compositional bias: basic and acidic residues. LIM zinc-binding domains are found at residues 234 to 297 (YSCY…CDSE), 299 to 359 (PRCA…NHAV), and 362 to 421 (QGCH…KMMS).

The protein belongs to the prickle / espinas / testin family. In terms of assembly, interacts via LIM domain 1 with ZYX. Interacts (via LIM domain 3) with ENAH and VASP. Interacts with ALKBH4, talin, actin, alpha-actinin, GRIP1 and PXN. Interacts (via LIM domain 2) with ACTL7A (via N-terminus). Heterodimer with ACTL7A; the heterodimer interacts with ENAH to form a heterotrimer.

The protein resides in the cytoplasm. Its subcellular location is the cell junction. It localises to the focal adhesion. Scaffold protein that may play a role in cell adhesion, cell spreading and in the reorganization of the actin cytoskeleton. Plays a role in the regulation of cell proliferation. May act as a tumor suppressor. This Eulemur macaco macaco (Black lemur) protein is Testin (TES).